Reading from the N-terminus, the 423-residue chain is Voltage-dependent calcium channel gamma-8 subunit (423 aa).

The next 4 helical transmembrane spans lie at 19–39 (VQVL…TIAI), 127–147 (SSIF…CVAA), 157–177 (IILG…IGVI), and 207–227 (FGGL…NIYI). Residues S251 and S254 each carry the phosphoserine modification. Residues 271–304 (RRSRSSSRGSSEASPSRDASPGGPGGPGFASTDI) are disordered. The segment covering 276 to 287 (SSRGSSEASPSR) has biased composition (low complexity). Residues 318–338 (VAAGLASAGGGGSGAGVGAYG) form a helical membrane-spanning segment. 2 disordered regions span residues 342–363 (GAAG…GFLT) and 378–423 (VTVT…TTPV). Positions 384 to 399 (PAAPAPAPAPPAPAAP) are enriched in pro residues. The segment covering 410–423 (ASNTNTLNRKTTPV) has biased composition (polar residues).

Belongs to the PMP-22/EMP/MP20 family. CACNG subfamily. In terms of assembly, interacts with CACNA1C. Identified in a complex with the L-type calcium channel subunits CACNA1C, CACNA2D1 and either CACNB1 or CACNB2. Acts as an auxiliary subunit for AMPA-selective glutamate receptors (AMPARs). Found in a complex with GRIA1, GRIA2, GRIA3, GRIA4, CNIH2, CNIH3, CACNG2, CACNG3, CACNG4, CACNG5 and CACNG7. Interacts with CNIH2. Found in a complex with GRIA1, GRIA2, GRIA3, GRIA4, DLG4 and CNIH2. In terms of processing, palmitoylated. Probably palmitoylated by ZDHHC3 and ZDHHC7.

It is found in the cell membrane. Its subcellular location is the postsynaptic density membrane. Functionally, regulates the activity of L-type calcium channels that contain CACNA1C as pore-forming subunit. Regulates the trafficking and gating properties of AMPA-selective glutamate receptors (AMPARs). Promotes their targeting to the cell membrane and synapses and modulates their gating properties by slowing their rates of activation, deactivation and desensitization and by mediating their resensitization. Does not show subunit-specific AMPA receptor regulation and regulates all AMPAR subunits. Thought to stabilize the calcium channel in an inactivated (closed) state. The protein is Voltage-dependent calcium channel gamma-8 subunit of Mus musculus (Mouse).